We begin with the raw amino-acid sequence, 337 residues long: DNA-directed RNA polymerase subunit alpha (337 aa).

The interval 1–231 (MRNITTSAYT…KQLSVFDKIT (231 aa)) is alpha N-terminal domain (alpha-NTD). Positions 247-337 (ENTKLLQNIT…IAELKAQNEG (91 aa)) are alpha C-terminal domain (alpha-CTD).

It belongs to the RNA polymerase alpha chain family. As to quaternary structure, homodimer. The RNAP catalytic core consists of 2 alpha, 1 beta, 1 beta' and 1 omega subunit. When a sigma factor is associated with the core the holoenzyme is formed, which can initiate transcription.

The enzyme catalyses RNA(n) + a ribonucleoside 5'-triphosphate = RNA(n+1) + diphosphate. DNA-dependent RNA polymerase catalyzes the transcription of DNA into RNA using the four ribonucleoside triphosphates as substrates. The sequence is that of DNA-directed RNA polymerase subunit alpha from Campylobacter jejuni subsp. jejuni serotype O:2 (strain ATCC 700819 / NCTC 11168).